The primary structure comprises 235 residues: Phosphate-specific transport system accessory protein PhoU homolog 2 (235 aa).

Belongs to the PhoU family. Homodimer.

Its subcellular location is the cytoplasm. Plays a role in the regulation of phosphate uptake. In Thermotoga maritima (strain ATCC 43589 / DSM 3109 / JCM 10099 / NBRC 100826 / MSB8), this protein is Phosphate-specific transport system accessory protein PhoU homolog 2 (phoU2).